An 821-amino-acid chain; its full sequence is uncharacterized protein (821 aa).

Disordered regions lie at residues 1 to 20, 55 to 96, 134 to 205, 240 to 263, 274 to 293, 360 to 381, 430 to 450, 467 to 497, 512 to 535, and 549 to 641; these read MGQTNSRHSLIETDEPTTSS, SENY…EAYS, SYDF…NNEH, RLHQSPSPIPNSNDNDSQTRRSSW, PEEFPNASNPEAHSNFTPLN, NVLQNSSQNGNDQISSDPESNS, TSEDHAPTMTQENQSLHNESR, EFSTDLPPTFERSNSTFSHPEPTRSDFSQAF, RNLFPTSNSGNQSTSSFSRYNQPT, and AQEP…SNQT. 2 stretches are compositionally biased toward polar residues: residues 58 to 88 and 185 to 203; these read YADTPSRNTPNSSNGFPSETLVTSSAHCSTQ and SLPSNSNSTYTTPLQSINN. Polar residues predominate over residues 279–293; it reads NASNPEAHSNFTPLN. Residues 437–450 are compositionally biased toward polar residues; the sequence is TMTQENQSLHNESR. 2 stretches are compositionally biased toward low complexity: residues 517 to 529 and 568 to 578; these read TSNSGNQSTSSFS and SSLLDSSNSNS. Over residues 579–622 the composition is skewed to polar residues; it reads QRPFSTVPSESNVFSRNASGNFSMSQTHQPTTDNTSSFSTQPGR. Residues 766-809 form an RING-type; atypical zinc finger; that stretch reads CLICLETYTNGDICRKLQACKHFFHQACIDQWLTTGNNSCPLCR.

This is an uncharacterized protein from Schizosaccharomyces pombe (strain 972 / ATCC 24843) (Fission yeast).